The following is a 372-amino-acid chain: C-X-C chemokine receptor type 5 (372 aa).

Topologically, residues 1-55 (MNYPLTLEMDLENLEDLFWELDRLDNYNDTSLVENHLCPATEGPLMASFKAVFVP) are extracellular. N28 carries N-linked (GlcNAc...) asparagine glycosylation. Residues 56 to 76 (VAYSLIFLLGVIGNVLVLVIL) traverse the membrane as a helical segment. The Cytoplasmic segment spans residues 77–88 (ERHRQTRSSTET). The helical transmembrane segment at 89-109 (FLFHLAVADLLLVFILPFAVA) threads the bilayer. Topologically, residues 110–124 (EGSVGWVLGTFLCKT) are extracellular. C122 and C202 form a disulfide bridge. Residues 125-145 (VIALHKVNFYCSSLLLACIAV) traverse the membrane as a helical segment. Residues 146-167 (DRYLAIVHAVHAYRHRRLLSIH) are Cytoplasmic-facing. A helical transmembrane segment spans residues 168-188 (ITCGTIWLVGFLLALPEILFA). Residues 189–219 (KVSQGHHNNSLPRCTFSQENQAETHAWFTSR) lie on the Extracellular side of the membrane. The N-linked (GlcNAc...) asparagine glycan is linked to N196. The chain crosses the membrane as a helical span at residues 220–240 (FLYHVAGFLLPMLVMGWCYVG). Residues 241–259 (VVHRLRQAQRRPQRQKAVR) lie on the Cytoplasmic side of the membrane. A helical membrane pass occupies residues 260–280 (VAILVTSIFFLCWSPYHIVIF). The Extracellular portion of the chain corresponds to 281-304 (LDTLARLKAVDNTCKLNGSLPVAI). Residues 305–325 (TMCEFLGLAHCCLNPMLYTFA) form a helical membrane-spanning segment. Residues 326 to 372 (GVKFRSDLSRLLTKLGCTGPASLCQLFPSWRRSSLSESENATSLTTF) lie on the Cytoplasmic side of the membrane.

It belongs to the G-protein coupled receptor 1 family. Expression in mature B-cells and Burkitt lymphoma cells.

Its subcellular location is the cell membrane. Functionally, cytokine receptor that binds to B-lymphocyte chemoattractant (BLC). Involved in B-cell migration into B-cell follicles of spleen and Peyer patches but not into those of mesenteric or peripheral lymph nodes. May have a regulatory function in Burkitt lymphoma (BL) lymphomagenesis and/or B-cell differentiation. The sequence is that of C-X-C chemokine receptor type 5 (CXCR5) from Homo sapiens (Human).